Consider the following 605-residue polypeptide: MRPKKDGLEDFLRLTPEIKKQLGSLVSDYCNVLNKEFTAGSVEITLRSYKICKAFINEAKAHGREWGGLMATLNICNFWAILRNNRVRRRAENAGNDACSIACPIVMRYVLDHLIVVTDRFFIQAPSNRVMIPATIGTAMYKLLKHSRVRAYTYSKVLGVDRAAIMASGKQVVEHLNRMEKEGLLSSKFKAFCKWVFTYPVLEEMFQTMVSSKTGHLTDDVKDVRALIKTLPRASYSSHAGQRSYVSGVLPACLLSTKSKAVETPILVSGADRMDEELMGNDGGASHTEARYSESGQFHAFTDELESLPSPTMPLKPGAQSADCGDSSSSSSDSGNSDTEQSEREEARAEAPRLRAPKSRRTSRPNRGQTPCPSNAAEPEQPWIAAVHQESDERPIFPHPSKPTFLPPVKRKKGLRDSREGMFLPKPEAGSAISDVFEGREVCQPKRIRPFHPPGSPWANRPLPASLAPTPTGPVHEPVGSLTPAPVPQPLDPAPAVTPEASHLLEDPDEETSQAVKALREMADTVIPQKEEAAICGQMDLSHPPPRGHLDELTTTLESMTEDLNLDSPLTPELNEILDTFLNDECLLHAMHISTGLSIFDTSLF.

Disordered regions lie at residues 307–380 (SLPS…AEPE) and 447–499 (RIRP…AVTP). A compositionally biased stretch (low complexity) spans 321–338 (SADCGDSSSSSSDSGNSD). Basic and acidic residues predominate over residues 341–353 (QSEREEARAEAPR). The segment covering 355-364 (RAPKSRRTSR) has biased composition (basic residues).

This sequence belongs to the herpesviridae Rta family. As to quaternary structure, interacts with human ATF7IP protein, leading to promote and regulate host genes in virus-infected cells. Interacts with RNA polymerase III complex; this interaction downregulates small RNA transcription and 5'-pppRNA production.

It localises to the host nucleus. The protein resides in the virion tegument. Functionally, immediate-early transcription factor that controls the initiation of viral lytic gene expression and lytic reactivation from latency. Triggers lytic replication, and initiates a cellular senescence program in epithelial cells. Up-regulates human DCR3/TNFRSF6B by directly binding to its receptor. Globally induces a proteasome-dependent loss of SUMOylated proteins in the host cell and the loss of promeylocytic leukemia nuclear bodies. Improves the stability of the triplex capsid protein TRX1 by reducing the ubiquitination level of the latter. Mediates evasion of inflammasome activation and antiviral responses (T- and NK cell activation) during EBV early lytic infection. This is Replication and transcription activator from Epstein-Barr virus (strain B95-8) (HHV-4).